The sequence spans 365 residues: Sulfate/thiosulfate import ATP-binding protein CysA (365 aa).

The ABC transporter domain maps to 3–237; that stretch reads IEIANIKKSF…PATRFVLEFM (235 aa). 35–42 is an ATP binding site; the sequence is GPSGSGKT.

The protein belongs to the ABC transporter superfamily. Sulfate/tungstate importer (TC 3.A.1.6) family. In terms of assembly, the complex is composed of two ATP-binding proteins (CysA), two transmembrane proteins (CysT and CysW) and a solute-binding protein (CysP).

It localises to the cell inner membrane. The catalysed reaction is sulfate(out) + ATP + H2O = sulfate(in) + ADP + phosphate + H(+). It carries out the reaction thiosulfate(out) + ATP + H2O = thiosulfate(in) + ADP + phosphate + H(+). Its function is as follows. Part of the ABC transporter complex CysAWTP involved in sulfate/thiosulfate import. Responsible for energy coupling to the transport system. This chain is Sulfate/thiosulfate import ATP-binding protein CysA, found in Escherichia coli O157:H7.